We begin with the raw amino-acid sequence, 343 residues long: Phosphoribosylformylglycinamidine cyclo-ligase (343 aa).

Belongs to the AIR synthase family.

Its subcellular location is the cytoplasm. It catalyses the reaction 2-formamido-N(1)-(5-O-phospho-beta-D-ribosyl)acetamidine + ATP = 5-amino-1-(5-phospho-beta-D-ribosyl)imidazole + ADP + phosphate + H(+). It participates in purine metabolism; IMP biosynthesis via de novo pathway; 5-amino-1-(5-phospho-D-ribosyl)imidazole from N(2)-formyl-N(1)-(5-phospho-D-ribosyl)glycinamide: step 2/2. The chain is Phosphoribosylformylglycinamidine cyclo-ligase from Enterococcus faecalis (strain ATCC 700802 / V583).